The following is a 621-amino-acid chain: Chaperone protein HscA homolog (621 aa).

The protein belongs to the heat shock protein 70 family.

Its function is as follows. Chaperone involved in the maturation of iron-sulfur cluster-containing proteins. Has a low intrinsic ATPase activity which is markedly stimulated by HscB. The polypeptide is Chaperone protein HscA homolog (Ralstonia pickettii (strain 12J)).